We begin with the raw amino-acid sequence, 469 residues long: 3-isopropylmalate dehydratase large subunit (469 aa).

Residues C347, C408, and C411 each coordinate [4Fe-4S] cluster.

The protein belongs to the aconitase/IPM isomerase family. LeuC type 1 subfamily. In terms of assembly, heterodimer of LeuC and LeuD. [4Fe-4S] cluster is required as a cofactor.

The enzyme catalyses (2R,3S)-3-isopropylmalate = (2S)-2-isopropylmalate. It functions in the pathway amino-acid biosynthesis; L-leucine biosynthesis; L-leucine from 3-methyl-2-oxobutanoate: step 2/4. Functionally, catalyzes the isomerization between 2-isopropylmalate and 3-isopropylmalate, via the formation of 2-isopropylmaleate. The chain is 3-isopropylmalate dehydratase large subunit from Actinobacillus pleuropneumoniae serotype 7 (strain AP76).